A 485-amino-acid polypeptide reads, in one-letter code: Sphingosine kinase 1 (485 aa).

The DAGKc domain maps to 116–258 (GRPKKLLVFV…LDVATISQGT (143 aa)). ATP contacts are provided by residues 126–128 (NPF) and Thr158. Substrate is bound at residue 183 to 186 (SGDG). Catalysis depends on Asp185, which acts as the Proton donor/acceptor. ATP contacts are provided by residues Glu190 and 215-217 (GSG). Asp276 contacts substrate. Residues Arg283, Arg289, and 446 to 448 (DGE) each bind ATP.

Requires Mg(2+) as cofactor. Highly expressed in stems and flowers and at lower levels in roots, leaves and siliques.

Its subcellular location is the vacuole membrane. The catalysed reaction is a sphingoid base + ATP = a sphingoid 1-phosphate + ADP + H(+). With respect to regulation, activated by phosphatidic acid (PA). Binding with PA stimulates the activity by promoting the binding of substrate to the catalytic site. Involved in the production of sphingolipid metabolites. Phosphorylates sphingosine and various sphingoid long-chain base (LCB) products, such as phytosphingosine (PHS, 4-hydroxysphinganine), 4-hydroxy-8-sphingenine, 4,8-sphingadienine, D-erythro-dihydrosphingosine and D,L-threo-dihydrosphingosine. Is required for abscisic acid (ABA) signaling that mediates stomatal closure, inhibition of seed germination and root elongation. May function upstream of PLDALPHA1 and phosphatidic acid (PA) in an amplification response to ABA that mediates stomatal closure. The protein is Sphingosine kinase 1 (SPHK1) of Arabidopsis thaliana (Mouse-ear cress).